The sequence spans 458 residues: Brassinosteroid-related acyltransferase 1 (458 aa).

His-164 functions as the Proton acceptor in the catalytic mechanism.

This sequence belongs to the plant acyltransferase family. Highly expressed in young tissues and vascular bundles. Mostly expressed in young leaves, primary roots, flowers (including petals and sepals), and siliques.

The protein localises to the endoplasmic reticulum. It localises to the nucleus. Its pathway is plant hormone biosynthesis; brassinosteroid biosynthesis. Functionally, brassinosteroids (BR) acyltransferase with acyl-CoA ligase activity toward brassinolide (BL), castasterone (CS), typhasterol (TY), 6-deoxotyphasterol (6-deoxoTY), and 6-deoxocastasterone (6-deoxoCS) and thus converts them to corresponding lauroyl esters. Regulates BR homeostasis and promotes BR-mediated cell growth regulation. Involved in vascular bundle development. The chain is Brassinosteroid-related acyltransferase 1 from Arabidopsis thaliana (Mouse-ear cress).